Reading from the N-terminus, the 386-residue chain is Phosphoglycerate kinase (386 aa).

Substrate is bound by residues 21–23 (DLN), Arg-36, 59–62 (HLGR), Arg-112, and Arg-145. Residues Lys-196, Glu-313, and 339 to 342 (GGDT) each bind ATP.

It belongs to the phosphoglycerate kinase family. Monomer.

Its subcellular location is the cytoplasm. It carries out the reaction (2R)-3-phosphoglycerate + ATP = (2R)-3-phospho-glyceroyl phosphate + ADP. It functions in the pathway carbohydrate degradation; glycolysis; pyruvate from D-glyceraldehyde 3-phosphate: step 2/5. The chain is Phosphoglycerate kinase from Haemophilus influenzae (strain 86-028NP).